Consider the following 219-residue polypeptide: MKDFSDFFRNPHIWDREIVAVGGDLSPERLLYAYKNGIFPWSDQPILWYCLDPRGIFDLNKLHISKRLKRKINQKRYTITFNRAFEQVMRCCAYRPGEETWITDLFIKSYTEFHKLGYAHSIEVWDENGNLGGGVYGVAIGNFFAGESMFSFISDFGKIGLFHLFEALKKDQFTLFDTQQLNIVTLCLGAYQIPKKEYLRRLESAVASGKKWNPLRTVF.

The protein belongs to the L/F-transferase family.

It localises to the cytoplasm. The catalysed reaction is N-terminal L-lysyl-[protein] + L-leucyl-tRNA(Leu) = N-terminal L-leucyl-L-lysyl-[protein] + tRNA(Leu) + H(+). It catalyses the reaction N-terminal L-arginyl-[protein] + L-leucyl-tRNA(Leu) = N-terminal L-leucyl-L-arginyl-[protein] + tRNA(Leu) + H(+). The enzyme catalyses L-phenylalanyl-tRNA(Phe) + an N-terminal L-alpha-aminoacyl-[protein] = an N-terminal L-phenylalanyl-L-alpha-aminoacyl-[protein] + tRNA(Phe). Functionally, functions in the N-end rule pathway of protein degradation where it conjugates Leu, Phe and, less efficiently, Met from aminoacyl-tRNAs to the N-termini of proteins containing an N-terminal arginine or lysine. The polypeptide is Leucyl/phenylalanyl-tRNA--protein transferase (Leptospira borgpetersenii serovar Hardjo-bovis (strain JB197)).